Here is a 793-residue protein sequence, read N- to C-terminus: Putative potassium transporter 8 (793 aa).

Residues 1 to 22 (MDLEFGRGMRSPQRDSWKTTLL) are Cytoplasmic-facing. A helical membrane pass occupies residues 23 to 43 (LAYQSLGVVYGDLSISPLYVF). Residues 44–59 (KSTFAEDIQHSETNEE) lie on the Extracellular side of the membrane. The chain crosses the membrane as a helical span at residues 60–80 (IFGVLSFVFWTLTLIPLIKYV). Over 81–151 (SIVLRADDNG…EKHKKLHTAL (71 aa)) the chain is Cytoplasmic. A helical transmembrane segment spans residues 152–172 (LIMVLIGTCMVIGDGVLTPAI). Topologically, residues 173–191 (SVFSAVSGLEFSLSKDHRE) are extracellular. The chain crosses the membrane as a helical span at residues 192–212 (YAVIPITCVILAFLFALQHYG). Over 213-215 (THR) the chain is Cytoplasmic. A helical transmembrane segment spans residues 216–236 (VGFLFAPIVLAWLICMSALGL). Over 237–264 (YNIIHWNPHVYQALNPCYMFKFLKKTRK) the chain is Extracellular. Residues 265-285 (YGWMSLGGILLCMTGSEAMFA) form a helical membrane-spanning segment. Residues 286–292 (DLGHFSY) are Cytoplasmic-facing. Residues 293–313 (SAIQLAFTSLVYPALILAYMG) traverse the membrane as a helical segment. Residues 314 to 343 (QAAYLSKHHDFYSNSQVGFYIAVPDKVRWP) are Extracellular-facing. A helical transmembrane segment spans residues 344-364 (VLVLAILASVVGSQAIISGTF). The Cytoplasmic segment spans residues 365–391 (SIINQSQSLSCFPRVKVVHTSDKIHGQ). A helical transmembrane segment spans residues 392 to 412 (IYIPEINWLLMILCIAVTVGF). The Extracellular segment spans residues 413 to 422 (RDTKHMGNAS). N-linked (GlcNAc...) asparagine glycosylation is present at asparagine 420. The helical transmembrane segment at 423–443 (GLAVITVMLVTTCLTSLVIML) threads the bilayer. The Cytoplasmic portion of the chain corresponds to 444-448 (CWRRP). Residues 449-469 (PVLALCFLLFFGSVEALYFSA) form a helical membrane-spanning segment. Residues 470–473 (SLIK) lie on the Extracellular side of the membrane. A helical transmembrane segment spans residues 474-494 (FLEGAWLPILLALFLMAVMLV). The Cytoplasmic portion of the chain corresponds to 495-793 (WHYTTIKKYE…LLEVGMVYVL (299 aa)). Positions 664–675 (DSVQHSSAASVE) are enriched in polar residues. A disordered region spans residues 664 to 698 (DSVQHSSAASVETTTTRRRSGGGDDDGSPGGGGGR).

It belongs to the HAK/KUP transporter (TC 2.A.72.3) family.

It is found in the membrane. In terms of biological role, high-affinity potassium transporter. This chain is Putative potassium transporter 8 (HAK8), found in Oryza sativa subsp. japonica (Rice).